The following is a 236-amino-acid chain: Biosynthetic peptidoglycan transglycosylase (236 aa).

Residues 20–40 (GLVVAAVLALIPTMLTFLYLP) form a helical membrane-spanning segment.

Belongs to the glycosyltransferase 51 family.

Its subcellular location is the cell inner membrane. The catalysed reaction is [GlcNAc-(1-&gt;4)-Mur2Ac(oyl-L-Ala-gamma-D-Glu-L-Lys-D-Ala-D-Ala)](n)-di-trans,octa-cis-undecaprenyl diphosphate + beta-D-GlcNAc-(1-&gt;4)-Mur2Ac(oyl-L-Ala-gamma-D-Glu-L-Lys-D-Ala-D-Ala)-di-trans,octa-cis-undecaprenyl diphosphate = [GlcNAc-(1-&gt;4)-Mur2Ac(oyl-L-Ala-gamma-D-Glu-L-Lys-D-Ala-D-Ala)](n+1)-di-trans,octa-cis-undecaprenyl diphosphate + di-trans,octa-cis-undecaprenyl diphosphate + H(+). Its pathway is cell wall biogenesis; peptidoglycan biosynthesis. Its function is as follows. Peptidoglycan polymerase that catalyzes glycan chain elongation from lipid-linked precursors. The protein is Biosynthetic peptidoglycan transglycosylase of Mesorhizobium japonicum (strain LMG 29417 / CECT 9101 / MAFF 303099) (Mesorhizobium loti (strain MAFF 303099)).